The chain runs to 201 residues: Recombination protein RecR (201 aa).

The segment at 60–75 adopts a C4-type zinc-finger fold; it reads CSCCGNVDTIDPCTVC. A Toprim domain is found at 83–178; that stretch reads AVIIVVEDVA…RITRLAHGVP (96 aa).

It belongs to the RecR family.

In terms of biological role, may play a role in DNA repair. It seems to be involved in an RecBC-independent recombinational process of DNA repair. It may act with RecF and RecO. This Sinorhizobium medicae (strain WSM419) (Ensifer medicae) protein is Recombination protein RecR.